The sequence spans 116 residues: MPSVQKTVVKKSHKFVIDCTAPAGKIVDVAAFEKYLHDRIKVDNKVGNLGSTVVISKDKSKIIINTTIPFSKRYLKYLTKKFLKFKQIRDFLRVVATTKNTYELRYFNIGDSESQE.

This sequence belongs to the eukaryotic ribosomal protein eL22 family.

This Dictyostelium discoideum (Social amoeba) protein is Large ribosomal subunit protein eL22A (rpl22).